Consider the following 313-residue polypeptide: Olfactory receptor 1J1 (313 aa).

The Extracellular portion of the chain corresponds to 1-25; it reads MRLKNHSSVSEFLLLGFPIRPEQGG. The N-linked (GlcNAc...) asparagine glycan is linked to asparagine 5. A helical transmembrane segment spans residues 26-46; the sequence is IFFSLFLAMYLITVLGNLLII. The Cytoplasmic segment spans residues 47-57; that stretch reads LLIRLDSHLHT. Residues 58-78 form a helical membrane-spanning segment; the sequence is PMYFFLSHLAFTDISFSSVTV. Residues 79 to 97 are Extracellular-facing; the sequence is PKMLTKVQNQPIPITYEEC. The cysteines at positions 97 and 189 are disulfide-linked. Residues 98-118 form a helical membrane-spanning segment; sequence VSQTYFFIFFADLDSFLITSM. At 119–142 the chain is on the cytoplasmic side; it reads AYDRYMAICHPLHYITIMSQSRCA. Residues 143-163 traverse the membrane as a helical segment; the sequence is MLVAVSWVIASACALLHSLLL. Residues 164 to 196 are Extracellular-facing; it reads DQLSFCADHTVPHFFCDLGALLKLSCSDTSLNQ. The helical transmembrane segment at 197-217 threads the bilayer; it reads LVIFTAGLAAIMLPFLCILIS. The Cytoplasmic portion of the chain corresponds to 218 to 240; sequence YGRIGFTILQVPTTKGICKALST. A helical transmembrane segment spans residues 241-261; the sequence is CGSHLSVVALYYGSIIGLYFL. The Extracellular portion of the chain corresponds to 262-271; it reads PPSNSKINNN. The helical transmembrane segment at 272–292 threads the bilayer; it reads IVASVMYTVVTPMLNPFIYSL. Over 293–313 the chain is Cytoplasmic; that stretch reads RNKDMKGALKKLLSKKTEFSK.

The protein belongs to the G-protein coupled receptor 1 family.

It is found in the cell membrane. Functionally, odorant receptor. The chain is Olfactory receptor 1J1 from Mus musculus (Mouse).